We begin with the raw amino-acid sequence, 538 residues long: Putative cysteine ligase BshC (538 aa).

Residues 460 to 484 (KINEQIELLERMLKRNVEKKHEVEL) are a coiled coil.

It belongs to the BshC family.

Its function is as follows. Involved in bacillithiol (BSH) biosynthesis. May catalyze the last step of the pathway, the addition of cysteine to glucosamine malate (GlcN-Mal) to generate BSH. This Bacillus cereus (strain ZK / E33L) protein is Putative cysteine ligase BshC.